The chain runs to 168 residues: Phosphopantetheine adenylyltransferase (168 aa).

T14 is a binding site for substrate. Residues 14 to 15 (TF) and H22 contribute to the ATP site. Substrate contacts are provided by K46, L78, and R92. Residues 93-95 (GLR), E103, and 128-134 (YSFISSS) each bind ATP.

It belongs to the bacterial CoaD family. Homohexamer. Mg(2+) is required as a cofactor.

It localises to the cytoplasm. It carries out the reaction (R)-4'-phosphopantetheine + ATP + H(+) = 3'-dephospho-CoA + diphosphate. Its pathway is cofactor biosynthesis; coenzyme A biosynthesis; CoA from (R)-pantothenate: step 4/5. Functionally, reversibly transfers an adenylyl group from ATP to 4'-phosphopantetheine, yielding dephospho-CoA (dPCoA) and pyrophosphate. This Xanthomonas axonopodis pv. citri (strain 306) protein is Phosphopantetheine adenylyltransferase.